A 249-amino-acid chain; its full sequence is Uridylate kinase (249 aa).

13–16 serves as a coordination point for ATP; that stretch reads KLSG. Gly-55 serves as a coordination point for UMP. ATP-binding residues include Gly-56 and Arg-60. UMP-binding positions include Asp-75 and 136 to 143; that span reads IGNPFFTT. The ATP site is built by Thr-163, Phe-169, and Asp-172.

The protein belongs to the UMP kinase family. In terms of assembly, homohexamer.

The protein localises to the cytoplasm. It catalyses the reaction UMP + ATP = UDP + ADP. It participates in pyrimidine metabolism; CTP biosynthesis via de novo pathway; UDP from UMP (UMPK route): step 1/1. With respect to regulation, inhibited by UTP. Its function is as follows. Catalyzes the reversible phosphorylation of UMP to UDP. This is Uridylate kinase from Baumannia cicadellinicola subsp. Homalodisca coagulata.